The sequence spans 46 residues: MTQAPPVATTPRNYPIFTVRWLALHTLGIPTVFFLGALAAMQFIRR.

A helical transmembrane segment spans residues 21 to 37; it reads WLALHTLGIPTVFFLGA. Residue histidine 25 coordinates heme.

It belongs to the PsbE/PsbF family. In terms of assembly, heterodimer of an alpha subunit and a beta subunit. PSII is composed of 1 copy each of membrane proteins PsbA, PsbB, PsbC, PsbD, PsbE, PsbF, PsbH, PsbI, PsbJ, PsbK, PsbL, PsbM, PsbT, PsbX, PsbY, PsbZ, Psb30/Ycf12, peripheral proteins PsbO, CyanoQ (PsbQ), PsbU, PsbV and a large number of cofactors. It forms dimeric complexes. Requires heme b as cofactor.

It localises to the cellular thylakoid membrane. This b-type cytochrome is tightly associated with the reaction center of photosystem II (PSII). PSII is a light-driven water:plastoquinone oxidoreductase that uses light energy to abstract electrons from H(2)O, generating O(2) and a proton gradient subsequently used for ATP formation. It consists of a core antenna complex that captures photons, and an electron transfer chain that converts photonic excitation into a charge separation. In Synechococcus sp. (strain CC9605), this protein is Cytochrome b559 subunit beta.